Here is a 168-residue protein sequence, read N- to C-terminus: MNSKGQYPTQPTYPVQPPGNPVYPQTLHLPQAPPYTDAPPAYSELYRPSFVHPGAATVPTMSAAFPGASLYLPMAQSVAVGPLGSTIPMAYYPVSPIYPPGSTVLVEGGYDAGARFGAGATAGNIPPPPPGCPPNAAQLAVMQGANVLVTQRKGNFFMGGSDGGYTIW.

Positions 1-13 (MNSKGQYPTQPTY) are enriched in low complexity. Residues 1–25 (MNSKGQYPTQPTYPVQPPGNPVYPQ) form a disordered region. The short motif at 39–42 (PPAY) is the PPAY element. At Ser77 the chain carries Phosphoserine.

As to quaternary structure, interacts with SOX6. Interacts with DAZ1 and DAZL. Interacts with IL17RB. May interact with FAM168B. Interacts with INCA1. Interacts with EIF4G1 and EIF4G2. Interacts (via PPAY motif) with NEDD4 (via WW domains). Interacts with transcription factor TCF4; the interaction results in localization of DAZAP2 to the nucleus. Interacts with transcription factors TCF7 and TCF7L1. Interacts with transcription factor LEF1. Interacts with serine/threonine-protein kinase HIPK2; the interaction results in phosphorylation of DAZAP2 which causes localization of DAZAP2 to the nucleus, reduces interaction of DAZAP2 with HIPK2 and prevents DAZAP2-dependent degradation of HIPK2. Interacts with ubiquitin ligase SIAH1; the interaction is decreased following phosphorylation of DAZAP2 by HIPK2. Interacts with TP53; the interaction is triggered by DNA damage. Ubiquitinated by SMURF2, leading to proteasomal degradation. Ubiquitinated by NEDD4, leading to proteasomal degradation. Post-translationally, following DNA damage, phosphorylated by HIPK2 which promotes DAZAP2 localization to the nucleus, reduces interaction of DAZAP2 with HIPK2 and SIAH1, and prevents DAZAP2-dependent ubiquitination of HIPK2 by E3 ubiquitin-protein ligase SIAH1 and subsequent HIPK2 proteasomal degradation.

It localises to the cytoplasm. The protein resides in the nucleus. Its subcellular location is the nucleus speckle. The protein localises to the nuclear body. It is found in the stress granule. Its function is as follows. In unstressed cells, promotes SIAH1-mediated polyubiquitination and degradation of the serine/threonine-protein kinase HIPK2, probably by acting as a loading factor that potentiates complex formation between HIPK2 and ubiquitin ligase SIAH1. In response to DNA damage, localizes to the nucleus following phosphorylation by HIPK2 and modulates the expression of a subset of TP53/p53 target genes by binding to TP53 at target gene promoters. This limits the expression of a number of cell death-mediating TP53 target genes, reducing DNA damage-induced cell death. Enhances the binding of transcription factor TCF7L2/TCF4, a Wnt signaling pathway effector, to the promoters of target genes. Plays a role in stress granule formation. This Macaca fascicularis (Crab-eating macaque) protein is DAZ-associated protein 2.